Consider the following 215-residue polypeptide: L-fuculose phosphate aldolase (215 aa).

Residues 28–29 (GN), 43–44 (TG), and 71–72 (SS) contribute to the substrate site. Catalysis depends on glutamate 73, which acts as the Proton donor/acceptor. 4 residues coordinate Zn(2+): glutamate 73, histidine 92, histidine 94, and histidine 155.

Belongs to the aldolase class II family. AraD/FucA subfamily. In terms of assembly, homotetramer. Zn(2+) serves as cofactor.

The catalysed reaction is L-fuculose 1-phosphate = (S)-lactaldehyde + dihydroxyacetone phosphate. The protein operates within carbohydrate degradation; L-fucose degradation; L-lactaldehyde and glycerone phosphate from L-fucose: step 3/3. In terms of biological role, involved in the degradation of L-fucose and D-arabinose. Catalyzes the reversible cleavage of L-fuculose 1-phosphate (Fuc1P) to yield dihydroxyacetone phosphate (DHAP) and L-lactaldehyde. This chain is L-fuculose phosphate aldolase, found in Escherichia coli O157:H7.